The primary structure comprises 453 residues: Glucose N-acetyltransferase 1-B (453 aa).

The Cytoplasmic portion of the chain corresponds to 1 to 8 (MLKRKVRY). The helical; Signal-anchor for type II membrane protein transmembrane segment at 9–29 (LLLIVVVFTGIILSVEAIMRF) threads the bilayer. Topologically, residues 30–453 (QLNKNVDYYL…LESRAICQVN (424 aa)) are lumenal. Asparagine 108, asparagine 126, and asparagine 176 each carry an N-linked (GlcNAc...) asparagine glycan. The DXD signature appears at 187–189 (DND).

It belongs to the GNT1 family.

The protein localises to the golgi apparatus membrane. Its subcellular location is the vacuole membrane. Functionally, N-acetylglucosaminyltransferase involved in the Golgi-specific modification of N-linked glycans. This chain is Glucose N-acetyltransferase 1-B (GNT1-B), found in Kluyveromyces lactis (strain ATCC 8585 / CBS 2359 / DSM 70799 / NBRC 1267 / NRRL Y-1140 / WM37) (Yeast).